Reading from the N-terminus, the 335-residue chain is Putative D-threonate 4-phosphate dehydrogenase (335 aa).

Substrate-binding residues include histidine 140 and threonine 141. Residues histidine 170, histidine 214, and histidine 269 each coordinate a divalent metal cation. Residues lysine 277 and arginine 295 each coordinate substrate.

The protein belongs to the PdxA family. PdxA2 subfamily. Homodimer. It depends on a divalent metal cation as a cofactor.

It carries out the reaction 4-O-phospho-D-threonate + NAD(+) = dihydroxyacetone phosphate + CO2 + NADH. Catalyzes the NAD-dependent oxidation and subsequent decarboxylation of D-threonate 4-phosphate to produce dihydroxyacetone phosphate (DHAP). The sequence is that of Putative D-threonate 4-phosphate dehydrogenase from Symbiobacterium thermophilum (strain DSM 24528 / JCM 14929 / IAM 14863 / T).